The sequence spans 1509 residues: DNA-directed RNA polymerase subunit beta' (1509 aa).

Residues Cys-75, Cys-77, Cys-90, and Cys-93 each coordinate Zn(2+). Residues Asp-474, Asp-476, and Asp-478 each contribute to the Mg(2+) site. Zn(2+)-binding residues include Cys-804, Cys-878, Cys-885, and Cys-888.

The protein belongs to the RNA polymerase beta' chain family. As to quaternary structure, the RNAP catalytic core consists of 2 alpha, 1 beta, 1 beta' and 1 omega subunit. When a sigma factor is associated with the core the holoenzyme is formed, which can initiate transcription. Requires Mg(2+) as cofactor. Zn(2+) is required as a cofactor.

The enzyme catalyses RNA(n) + a ribonucleoside 5'-triphosphate = RNA(n+1) + diphosphate. In terms of biological role, DNA-dependent RNA polymerase catalyzes the transcription of DNA into RNA using the four ribonucleoside triphosphates as substrates. The polypeptide is DNA-directed RNA polymerase subunit beta' (Sulfurovum sp. (strain NBC37-1)).